A 453-amino-acid polypeptide reads, in one-letter code: MGRTREAGCVAAGVVIGAGACYCVYRLAWGRDENEKIWDEDEESTDTSEIGVETVKGAKTNAGAGSGAKLQGDSEVKPEVSLGLEDCPGVKEKAHSGSHSGGGLEAKAKALFNTLKEQASAKAGKGARVGTISGNRTLAPSLPCPGGRGGGCHPTRSGSRAGGRASGKSKGKARSKSTRAPATTWPVRRGKFNFPYKIDDILSAPDLQKVLNILERTNDPFIQEVALVTLGNNAAYSFNQNAIRELGGVPIIAKLIKTKDPIIREKTYNALNNLSVNAENQGKIKTYISQVCDDTMVCRLDSAVQMAGLRLLTNMTVTNHYQHLLSYSFPDFFALLFLGNHFTKIQIMKLIINFTENPAMTRELVSCKVPSELISLFNKEWDREILLNILTLFENINDNIKNEGLASSRKEFSRSSLFFLFKESGVCVKKIKALANHNDLVVKVKVLKVLTKL.

At Met-1–Glu-6 the chain is on the mitochondrial intermembrane side. Mitochondrion outer membrane (MOM)-targeting sequence stretches follow at residues Met-1 to Glu-6 and Arg-26 to Lys-36. The helical; Signal-anchor transmembrane segment at Ala-7–Trp-29 threads the bilayer. Over Gly-30 to Leu-453 the chain is Cytoplasmic. Disordered regions lie at residues Ala-58–Lys-77 and Ile-132–Ala-182. Over residues Gly-167 to Ser-177 the composition is skewed to basic residues. ARM repeat units follow at residues Pro-195–Ala-235, Ser-237–Val-276, Pro-358–Asp-398, and Ser-415–Leu-453.

The protein belongs to the eutherian X-chromosome-specific Armcx family. In terms of assembly, interacts with MIRO1. As to expression, expressed at high levels ovary, heart, testis, prostate, brain, spleen and colon. Expressed at very low levels in liver and thymus. Not expressed in peripheral blood leukocytes. Not or reduced expressed in lung, prostate, colon, pancreas and ovarian carcinomas.

The protein resides in the mitochondrion. Its subcellular location is the mitochondrion outer membrane. In terms of biological role, regulates mitochondrial transport during axon regeneration. Increases the proportion of motile mitochondria by recruiting stationary mitochondria into the motile pool. Enhances mitochondria movement and neurite growth in both adult axons and embryonic neurons. Promotes neuronal survival and axon regeneration after nerve injury. May link mitochondria to the Trak1-kinesin motor complex via its interaction with MIRO1. The chain is Armadillo repeat-containing X-linked protein 1 (ARMCX1) from Homo sapiens (Human).